A 113-amino-acid polypeptide reads, in one-letter code: Large ribosomal subunit protein uL24 (113 aa).

This sequence belongs to the universal ribosomal protein uL24 family. Part of the 50S ribosomal subunit.

Functionally, one of two assembly initiator proteins, it binds directly to the 5'-end of the 23S rRNA, where it nucleates assembly of the 50S subunit. One of the proteins that surrounds the polypeptide exit tunnel on the outside of the subunit. The protein is Large ribosomal subunit protein uL24 of Chlamydia felis (strain Fe/C-56) (Chlamydophila felis).